A 468-amino-acid polypeptide reads, in one-letter code: RUS family member 1 (468 aa).

An N-acetylalanine modification is found at Ala2. Residue Thr49 is modified to Phosphothreonine. Residues Leu247–Leu267 traverse the membrane as a helical segment.

It belongs to the RUS1 family.

The protein resides in the membrane. The polypeptide is RUS family member 1 (Homo sapiens (Human)).